A 197-amino-acid polypeptide reads, in one-letter code: Small ribosomal subunit protein uS4A (197 aa).

In terms of domain architecture, S4 RNA-binding spans 107–181; that stretch reads RRLQTQVYKL…VARRNAARKA (75 aa). The disordered stretch occupies residues 160–197; that stretch reads PTSPFGGARPGRVARRNAARKAEASGEAADEADEADEE. Residue Lys-180 forms a Glycyl lysine isopeptide (Lys-Gly) (interchain with G-Cter in ubiquitin) linkage. Phosphoserine is present on Ser-184. Acidic residues predominate over residues 187 to 197; the sequence is AADEADEADEE.

This sequence belongs to the universal ribosomal protein uS4 family. Component of the small ribosomal subunit (SSU). Mature yeast ribosomes consist of a small (40S) and a large (60S) subunit. The 40S small subunit contains 1 molecule of ribosomal RNA (18S rRNA) and 33 different proteins (encoded by 57 genes). The large 60S subunit contains 3 rRNA molecules (25S, 5.8S and 5S rRNA) and 46 different proteins (encoded by 81 genes). Interacts with snoRNA U3. uS11 interacts with MPP10. Component of the ribosomal small subunit (SSU) processome composed of at least 40 protein subunits and snoRNA U3.

The protein resides in the cytoplasm. It localises to the nucleus. It is found in the nucleolus. In terms of biological role, component of the ribosome, a large ribonucleoprotein complex responsible for the synthesis of proteins in the cell. The small ribosomal subunit (SSU) binds messenger RNAs (mRNAs) and translates the encoded message by selecting cognate aminoacyl-transfer RNA (tRNA) molecules. The large subunit (LSU) contains the ribosomal catalytic site termed the peptidyl transferase center (PTC), which catalyzes the formation of peptide bonds, thereby polymerizing the amino acids delivered by tRNAs into a polypeptide chain. The nascent polypeptides leave the ribosome through a tunnel in the LSU and interact with protein factors that function in enzymatic processing, targeting, and the membrane insertion of nascent chains at the exit of the ribosomal tunnel. uS4 is involved in nucleolar processing of pre-18S ribosomal RNA and ribosome assembly. This chain is Small ribosomal subunit protein uS4A, found in Saccharomyces cerevisiae (strain ATCC 204508 / S288c) (Baker's yeast).